The chain runs to 398 residues: UPF0496 protein At5g66660 (398 aa).

The next 2 membrane-spanning stretches (helical) occupy residues 240–260 (VFFA…TTMS) and 263–283 (PVVC…GKWF).

Belongs to the UPF0496 family.

It is found in the membrane. In Arabidopsis thaliana (Mouse-ear cress), this protein is UPF0496 protein At5g66660.